An 87-amino-acid chain; its full sequence is Small ribosomal subunit protein uS17 (87 aa).

It belongs to the universal ribosomal protein uS17 family. In terms of assembly, part of the 30S ribosomal subunit.

Functionally, one of the primary rRNA binding proteins, it binds specifically to the 5'-end of 16S ribosomal RNA. This Bacillus licheniformis (strain ATCC 14580 / DSM 13 / JCM 2505 / CCUG 7422 / NBRC 12200 / NCIMB 9375 / NCTC 10341 / NRRL NRS-1264 / Gibson 46) protein is Small ribosomal subunit protein uS17.